The chain runs to 144 residues: Cysteine-rich tail protein 1 (144 aa).

The tract at residues 51–105 (APEPTHLLQPTEVPGPKGAKGNQGAAPIQNQQAWQQPGNPYSSSQRQAGLTYAGP) is disordered. Polar residues predominate over residues 78–98 (IQNQQAWQQPGNPYSSSQRQA).

The protein belongs to the CYSRT1 family. As to quaternary structure, interacts with LCE1B; the interaction is direct. Interacts with LCE2C; the interaction is direct. Interacts with LCE3A; the interaction is direct. Interacts with LCE3C; the interaction is direct. Interacts with LCE4A; the interaction is direct. Interacts with LCE5A; the interaction is direct. Interacts with LCE1C. Interacts with LCE1D. Interacts with LCE1E. Interacts with LCE2A. Interacts with LCE3D. Interacts with LCE3E. Interacts with LCE1A. Expressed in the stratum granulosum, in skin and oral epithelia (at protein level).

Its subcellular location is the cornified envelope. Component of the stratum corneum that may contribute to epidermal antimicrobial host defenses. This Homo sapiens (Human) protein is Cysteine-rich tail protein 1 (CYSRT1).